The sequence spans 379 residues: Salicylate/benzoate carboxyl methyltransferase (379 aa).

Tyr-40 serves as a coordination point for S-adenosyl-L-homocysteine. Gln-47 contacts salicylate. Residues Cys-82, Asn-87, Asp-119, Leu-120, Ser-155, and Phe-156 each contribute to the S-adenosyl-L-homocysteine site. The salicylate site is built by His-176 and Trp-177. Residues Asn-188, Asp-275, Phe-277, and Asn-278 each coordinate Mg(2+).

Belongs to the methyltransferase superfamily. Type-7 methyltransferase family. SABATH subfamily. As to quaternary structure, homodimer. Requires Mg(2+) as cofactor. In terms of tissue distribution, expressed in flowers and at lower levels in leaves and stems. Hardly detected in roots and siliques. Expressed in the sepals and the leaf trichomes and hydathodes.

The enzyme catalyses benzoate + S-adenosyl-L-methionine = methyl benzoate + S-adenosyl-L-homocysteine. It carries out the reaction salicylate + S-adenosyl-L-methionine = methyl salicylate + S-adenosyl-L-homocysteine. Methyltransferase involved in the biosynthesis of methylsalicylate in response to stresses. Utilizes salicylic acid (SA) more efficiently than benzoic acid (BA). Can also use anthranilic acid and m-hydroxybenzoic acid as substrate. The sequence is that of Salicylate/benzoate carboxyl methyltransferase (BSMT1) from Arabidopsis thaliana (Mouse-ear cress).